The sequence spans 272 residues: Hematopoietically-expressed homeobox protein hhex (272 aa).

Positions 137-196 (RKGGQVRFSNDQTIELEKKFETQKYLSPPERKRLAKMLQLSERQVKTWFQNRRAKWRRLK) form a DNA-binding region, homeobox. Positions 222–272 (CLSAEQKSRESSLDDPTSSPTSQGNLDSEVSDDSDQEVDIEGDKGYYNCAH) are disordered. Residues 250 to 261 (EVSDDSDQEVDI) are compositionally biased toward acidic residues.

First expressed in the dorsal endomesoderm of the gastrula stage embryo. The dorsal endomesoderm contributes to forming the embryonic liver, and expression continues in the liver throughout development. Also expressed in precursors of the developing thyroid gland, and beginning at the tailbud stage, expressed in the ventral region of the head. Also transiently expressed in the endothelial layer of developing vascular tissues of the embryo, beginning at the tailbud stages.

Its subcellular location is the nucleus. Recognizes the DNA sequence 5'-ATTAA-3'. Transcriptional repressor. Regulates the differentiation of both endothelial and blood cells. Probably plays a role in the proliferation of vascular endothelial cells during blood vessel development. Establishes anterior identity at two levels; acts early to enhance canonical wnt-signaling by repressing expression of tle4, and acts later to inhibit nodal-signaling by directly targeting nodal/nr1 and nodal2/nr2. May play a role in liver development. Induces heart development. This Xenopus laevis (African clawed frog) protein is Hematopoietically-expressed homeobox protein hhex.